Reading from the N-terminus, the 179-residue chain is Hypoxanthine phosphoribosyltransferase (179 aa).

Residues Arg-45 and Gly-46 each coordinate diphosphate. Glu-101 is a binding site for GMP. Glu-101 contacts IMP. Positions 101 and 102 each coordinate Mg(2+). The Proton acceptor role is filled by Asp-105. GMP is bound by residues Asp-105–Leu-110, Lys-133, and Asp-161. IMP contacts are provided by residues Asp-105–Leu-110 and Lys-133. A diphosphate-binding site is contributed by Arg-167.

This sequence belongs to the purine/pyrimidine phosphoribosyltransferase family. As to quaternary structure, homotetramer. The cofactor is Mg(2+).

Its subcellular location is the cytoplasm. It catalyses the reaction IMP + diphosphate = hypoxanthine + 5-phospho-alpha-D-ribose 1-diphosphate. The catalysed reaction is GMP + diphosphate = guanine + 5-phospho-alpha-D-ribose 1-diphosphate. Its pathway is purine metabolism; IMP biosynthesis via salvage pathway; IMP from hypoxanthine: step 1/1. Functionally, purine salvage pathway enzyme which catalyzes the transfer of the ribosyl-5-phosphate group from 5-phospho-alpha-D-ribose 1-diphosphate (PRPP) to the N9 position of hypoxanthine to yield IMP (inosine 5'-monophosphate). To a lesser extent, can also act on guanine leading to GMP, but shows a highly less efficient activity with xanthine. The sequence is that of Hypoxanthine phosphoribosyltransferase (hpt) from Haemophilus influenzae (strain ATCC 51907 / DSM 11121 / KW20 / Rd).